The chain runs to 126 residues: MRHQKSGRKFNRTDAHRGAMFSNMVASLFKYQLIKTTLPKAKELRRVAEPLITLAKVDSVANRRLAFARLRNKEAVGILFSNLGPRYITRPGGYIRLLKCGFRHGDNAPMAYVEMLERPIIAEEVT.

It belongs to the bacterial ribosomal protein bL17 family. Part of the 50S ribosomal subunit. Contacts protein L32.

The chain is Large ribosomal subunit protein bL17 from Xylella fastidiosa (strain M12).